Consider the following 140-residue polypeptide: Nucleoside diphosphate kinase (140 aa).

ATP-binding residues include Lys-11, Phe-59, Arg-87, Thr-93, Arg-104, and Asn-114. The active-site Pros-phosphohistidine intermediate is the His-117.

This sequence belongs to the NDK family. Homotetramer. The cofactor is Mg(2+).

The protein localises to the cytoplasm. It carries out the reaction a 2'-deoxyribonucleoside 5'-diphosphate + ATP = a 2'-deoxyribonucleoside 5'-triphosphate + ADP. The catalysed reaction is a ribonucleoside 5'-diphosphate + ATP = a ribonucleoside 5'-triphosphate + ADP. Major role in the synthesis of nucleoside triphosphates other than ATP. The ATP gamma phosphate is transferred to the NDP beta phosphate via a ping-pong mechanism, using a phosphorylated active-site intermediate. In Acidiphilium cryptum (strain JF-5), this protein is Nucleoside diphosphate kinase.